Consider the following 70-residue polypeptide: MTTIRLKENEPVEVALRRFRREIERTGLIKELRARTAYEKPTTERKRKKAAAVSRTRKRLRSQMLPKKLY.

A disordered region spans residues 39–70 (EKPTTERKRKKAAAVSRTRKRLRSQMLPKKLY). The segment covering 45-61 (RKRKKAAAVSRTRKRLR) has biased composition (basic residues).

This sequence belongs to the bacterial ribosomal protein bS21 family.

The polypeptide is Small ribosomal subunit protein bS21 (Ralstonia nicotianae (strain ATCC BAA-1114 / GMI1000) (Ralstonia solanacearum)).